Reading from the N-terminus, the 64-residue chain is UPF0337 protein SAB0772 (64 aa).

A disordered region spans residues 1-40; sequence MADESKFEQAKGNVKETIGNVTDNKNLENEGKEDKASGKA. The segment covering 25–40 has biased composition (basic and acidic residues); sequence KNLENEGKEDKASGKA.

It belongs to the UPF0337 (CsbD) family.

The chain is UPF0337 protein SAB0772 from Staphylococcus aureus (strain bovine RF122 / ET3-1).